Reading from the N-terminus, the 635-residue chain is Cationic amino acid transporter 4 (635 aa).

The next 3 helical transmembrane spans lie at 42-62 (LTLL…TGAV), 66-86 (VAGP…LLAA), and 113-133 (LWAF…GAAV). N-linked (GlcNAc...) asparagine glycans are attached at residues asparagine 151 and asparagine 195. A helical membrane pass occupies residues 197 to 217 (TFSAISLLVILFIVILGFILA). Residue asparagine 221 is glycosylated (N-linked (GlcNAc...) asparagine). The next 5 membrane-spanning stretches (helical) occupy residues 229–249 (FAPF…YAFV), 270–290 (LAIA…STVL), 318–338 (GFIV…SLLF), 365–385 (QVPV…ALLL), and 391–411 (VQFL…SIIV). Serine 422 and serine 427 each carry phosphoserine. A helical transmembrane segment spans residues 478 to 498 (VTWALGVMLASAITIGCVLVF). N-linked (GlcNAc...) asparagine glycosylation occurs at asparagine 500. 3 helical membrane passes run 508 to 528 (WGYI…LLVL), 539 to 559 (LFQI…NICL), and 567 to 587 (TWVR…GYGI). Residue asparagine 601 is glycosylated (N-linked (GlcNAc...) asparagine).

This sequence belongs to the amino acid-polyamine-organocation (APC) superfamily. Cationic amino acid transporter (CAT) (TC 2.A.3.3) family.

The protein localises to the membrane. Its function is as follows. Involved in the transport of the cationic amino acids (arginine, lysine and ornithine). In Homo sapiens (Human), this protein is Cationic amino acid transporter 4 (SLC7A4).